The following is a 398-amino-acid chain: MNIHEYQAKRLLHEYGAPVANGVAVYSVEQAEKWAKKLPGPLYVVKSQIHAGGRGKGNFKELDSDAKGGVRLAKSVEEVVANVKEMLGKTLVTKQTGPEGKQVNRLYIEDGANIERELYLSLLIDRTTGRVAFVVSTEGGMDIETVAAETPEKICTLSIDPAEGVTDADCVKLCDELNLSGNAREDGEKLFPILYKAFCEKDMSLLEINPLIVMDDGRLRVLDAKVSFDNNALFRHPDILGLRDISEEDPKEIEASKHDLAYIALDGMIGCMVNGAGLAMATMDIIKLYGAEPANFLDVGGGASKEKVTHAFKIITADPNVKGILVNIFGGIMRCDVIAEGVIAAVKEVGLKVPLVVRLEGTNVEQGKAIINDSGLNVISANDLDDAAQKIVAAVKGA.

Positions 9-254 (KRLLHEYGAP…ISEEDPKEIE (246 aa)) constitute an ATP-grasp domain. ATP contacts are provided by residues lysine 46, 53–55 (GRG), glutamate 109, alanine 112, and glutamate 117. Residues asparagine 209 and aspartate 223 each contribute to the Mg(2+) site. Substrate contacts are provided by residues asparagine 274 and 331–333 (GIM).

The protein belongs to the succinate/malate CoA ligase beta subunit family. Heterotetramer of two alpha and two beta subunits. The cofactor is Mg(2+).

The enzyme catalyses succinate + ATP + CoA = succinyl-CoA + ADP + phosphate. It carries out the reaction GTP + succinate + CoA = succinyl-CoA + GDP + phosphate. The protein operates within carbohydrate metabolism; tricarboxylic acid cycle; succinate from succinyl-CoA (ligase route): step 1/1. Its function is as follows. Succinyl-CoA synthetase functions in the citric acid cycle (TCA), coupling the hydrolysis of succinyl-CoA to the synthesis of either ATP or GTP and thus represents the only step of substrate-level phosphorylation in the TCA. The beta subunit provides nucleotide specificity of the enzyme and binds the substrate succinate, while the binding sites for coenzyme A and phosphate are found in the alpha subunit. The chain is Succinate--CoA ligase [ADP-forming] subunit beta from Bartonella bacilliformis (strain ATCC 35685 / KC583 / Herrer 020/F12,63).